Here is a 357-residue protein sequence, read N- to C-terminus: S-adenosylmethionine:tRNA ribosyltransferase-isomerase (357 aa).

It belongs to the QueA family. Monomer.

It is found in the cytoplasm. It catalyses the reaction 7-aminomethyl-7-carbaguanosine(34) in tRNA + S-adenosyl-L-methionine = epoxyqueuosine(34) in tRNA + adenine + L-methionine + 2 H(+). The protein operates within tRNA modification; tRNA-queuosine biosynthesis. Transfers and isomerizes the ribose moiety from AdoMet to the 7-aminomethyl group of 7-deazaguanine (preQ1-tRNA) to give epoxyqueuosine (oQ-tRNA). The protein is S-adenosylmethionine:tRNA ribosyltransferase-isomerase of Buchnera aphidicola subsp. Acyrthosiphon pisum (strain APS) (Acyrthosiphon pisum symbiotic bacterium).